The primary structure comprises 542 residues: Cytochrome P450 monooxygenase sdnH (542 aa).

A helical transmembrane segment spans residues 25–45 (LYVAGGILGAFTVYSIILVVY). A disordered region spans residues 141–160 (IIPPRGLGQEDSIGSTRSHD). The chain crosses the membrane as a helical span at residues 340–360 (FMGAGTYPTAATLIFVAYYIL). Heme is bound at residue cysteine 483. N-linked (GlcNAc...) asparagine glycosylation is present at asparagine 506.

Belongs to the cytochrome P450 family. It depends on heme as a cofactor.

It localises to the membrane. It functions in the pathway antibiotic biosynthesis. Cytochrome P450 monooxygenase; part of the gene cluster that mediates the biosynthesis of sordarin and hypoxysordarin, glycoside antibiotics with a unique tetracyclic diterpene aglycone structure. First, the geranylgeranyl diphosphate synthase sdnC constructs GGDP from farnesyl diphosphate and isopentenyl diphosphate. The diterpene cyclase sdnA then catalyzes the cyclization of GGDP to afford cycloaraneosene. Cycloaraneosene is then hydroxylated four times by the putative cytochrome P450 monooxygenases sdnB, sdnE, sdnF and sdnH to give a hydroxylated cycloaraneosene derivative such as cycloaraneosene-8,9,13,19-tetraol. Although the order of the hydroxylations is unclear, at least C8, C9 and C13 of the cycloaraneosene skeleton are hydroxylated before the sordaricin formation. Dehydration of the 13-hydroxy group of the hydroxylated cycloaraneosene derivative might be catalyzed by an unassigned hypothetical protein such as sdnG and sdnP to construct the cyclopentadiene moiety. The FAD-dependent oxidoreductase sdnN is proposed to catalyze the oxidation at C9 of the hydroxylated cycloaraneosene derivative and also catalyze the Baeyer-Villiger oxidation to give the lactone intermediate. The presumed lactone intermediate would be hydrolyzed to give an acrolein moiety and a carboxylate moiety. Then, [4+2]cycloaddition would occur between the acrolein moiety and the cyclopentadiene moiety to give sordaricin. SdnN might also be involved in the [4+2]cycloaddition after the hypothesized oxidation to accommodate the oxidized product and prompt the [4+2]cycloaddition. GDP-6-deoxy-D-altrose may be biosynthesized from GDP-D-mannose by the putative GDP-mannose-4,6-dehydratase sdnI and the short-chain dehydrogenase sdnK. The glycosyltransferase sdnJ catalyzes the attachment of 6-deoxy-D-altrose onto the 19-hydroxy group of sordaricin to give 4'-O-demethylsordarin. The methyltransferase sdnD would complete the biosynthesis of sordarin. Sordarin can be further modified into hypoxysordarin. The unique acyl chain at the 3'-hydroxy group of hypoxysordarin would be constructed by an iterative type I PKS sdnO and the trans-acting polyketide methyltransferase sdnL. SdnL would be responsible for the introduction of an alpha-methyl group of the polyketide chain. Alternatively, the beta-lactamase-like protein sdnR might be responsible for the cleavage and transfer of the polyketide chain from the PKS sdnO to sordarin. Two putative cytochrome P450 monooxygenases, sdnQ and sdnT, might catalyze the epoxidations of the polyketide chain to complete the biosynthesis of hypoxysordarin. Transcriptional regulators sdnM and sdnS are presumably encoded for the transcriptional regulation of the expression of the sdn gene cluster. The protein is Cytochrome P450 monooxygenase sdnH of Sordaria araneosa (Pleurage araneosa).